A 550-amino-acid polypeptide reads, in one-letter code: Glucose-6-phosphate isomerase (550 aa).

Glu-357 functions as the Proton donor in the catalytic mechanism. Residues His-388 and Lys-516 contribute to the active site.

It belongs to the GPI family.

The protein resides in the cytoplasm. It carries out the reaction alpha-D-glucose 6-phosphate = beta-D-fructose 6-phosphate. The protein operates within carbohydrate biosynthesis; gluconeogenesis. Its pathway is carbohydrate degradation; glycolysis; D-glyceraldehyde 3-phosphate and glycerone phosphate from D-glucose: step 2/4. Its function is as follows. Catalyzes the reversible isomerization of glucose-6-phosphate to fructose-6-phosphate. This chain is Glucose-6-phosphate isomerase, found in Psychromonas ingrahamii (strain DSM 17664 / CCUG 51855 / 37).